The sequence spans 202 residues: Putative 3-methyladenine DNA glycosylase (202 aa).

The protein belongs to the DNA glycosylase MPG family.

The sequence is that of Putative 3-methyladenine DNA glycosylase from Alkaliphilus oremlandii (strain OhILAs) (Clostridium oremlandii (strain OhILAs)).